The sequence spans 761 residues: uncharacterized protein (761 aa).

The segment at 1–84 adopts a CR-type zinc-finger fold; it reads MIVKCPICDG…CGGSGKVVKC (84 aa). Residues 135-200 form the S1 motif domain; that stretch reads GKFYKGVVTR…EKREIDFKYI (66 aa).

This is an uncharacterized protein from Methanocaldococcus jannaschii (strain ATCC 43067 / DSM 2661 / JAL-1 / JCM 10045 / NBRC 100440) (Methanococcus jannaschii).